Consider the following 212-residue polypeptide: Acyl-homoserine-lactone synthase (212 aa).

The protein belongs to the autoinducer synthase family.

It catalyses the reaction a fatty acyl-[ACP] + S-adenosyl-L-methionine = an N-acyl-L-homoserine lactone + S-methyl-5'-thioadenosine + holo-[ACP] + H(+). In terms of biological role, required for the synthesis of OHHL (N-(3-oxohexanoyl)-L-homoserine lactone), an autoinducer molecule which binds to TraR and thus acts in the control of conjugal transfer. This Rhizobium radiobacter (Agrobacterium tumefaciens) protein is Acyl-homoserine-lactone synthase (traI).